The sequence spans 545 residues: MNPSTTQARVVVDELIRGGVRDVVLCPGSRNAPLAFALADADRAGRIRLHVRIDERTAGYLAIGLAIAAGAPVCVAMTSGTAVANLGPAVVEANYARVPLIVLSANRPYELLGTGANQTMEQLGYFGTQVRAAISLGLAEDAPERLDALNATWRSATCRVLAAATGSRTANAGPVQFDIPLREPLVPDPEPHGAPTPAGRPGGRPWTYTPPVSFDQPLDIDLSPDTVVIAGHGAGTHPNLAQLPTVAEPTAPAPDNPLHPLALRLLRPKQVIMLGRPTLHRPVSALLADPQVPVYALTTGPRWPDVSGNSQATGTRAVTTGAPSPAWLHRCEQANRHAVAAVRGQLAAHPLTTGLHVAAAVADALRPGDQLVLGASNPVRDAALVGLDSHHIRVRSNRGVAGIDGTVSTAIGAALAHEAAHDGRTVALIGDLTFVHDSSGLLIGPTEPTPRRLTIVVSNDNGGGIFELLEQGDPRFSDVSSRVFGTPHDVDVGALCRAYHVESAQIEVGELAAALDEPGPGMRVLEVKADRSSLRQLHAAIKAAL.

A disordered region spans residues 184 to 209 (PLVPDPEPHGAPTPAGRPGGRPWTYT). Low complexity predominate over residues 195–205 (PTPAGRPGGRP).

It belongs to the TPP enzyme family. MenD subfamily. As to quaternary structure, homodimer. Mg(2+) is required as a cofactor. It depends on Mn(2+) as a cofactor. Thiamine diphosphate serves as cofactor.

It carries out the reaction isochorismate + 2-oxoglutarate + H(+) = 5-enolpyruvoyl-6-hydroxy-2-succinyl-cyclohex-3-ene-1-carboxylate + CO2. The protein operates within quinol/quinone metabolism; 1,4-dihydroxy-2-naphthoate biosynthesis; 1,4-dihydroxy-2-naphthoate from chorismate: step 2/7. Its pathway is quinol/quinone metabolism; menaquinone biosynthesis. Functionally, catalyzes the thiamine diphosphate-dependent decarboxylation of 2-oxoglutarate and the subsequent addition of the resulting succinic semialdehyde-thiamine pyrophosphate anion to isochorismate to yield 2-succinyl-5-enolpyruvyl-6-hydroxy-3-cyclohexene-1-carboxylate (SEPHCHC). This Mycobacterium avium (strain 104) protein is 2-succinyl-5-enolpyruvyl-6-hydroxy-3-cyclohexene-1-carboxylate synthase.